A 187-amino-acid chain; its full sequence is Flavin prenyltransferase UbiX (187 aa).

Residues 9–11 (GAS), Ser-34, and Arg-123 each bind FMN. The dimethylallyl phosphate site is built by Tyr-153 and Lys-169.

This sequence belongs to the UbiX/PAD1 family.

The enzyme catalyses dimethylallyl phosphate + FMNH2 = prenylated FMNH2 + phosphate. Flavin prenyltransferase that catalyzes the synthesis of the prenylated FMN cofactor (prenyl-FMN) for 4-hydroxy-3-polyprenylbenzoic acid decarboxylase UbiD. The prenyltransferase is metal-independent and links a dimethylallyl moiety from dimethylallyl monophosphate (DMAP) to the flavin N5 and C6 atoms of FMN. This is Flavin prenyltransferase UbiX from Helicobacter pylori (strain ATCC 700392 / 26695) (Campylobacter pylori).